Consider the following 291-residue polypeptide: N-acetylmannosamine kinase (291 aa).

Residues alanine 5 to lysine 12 and glycine 132 to serine 139 contribute to the ATP site. Zn(2+) is bound by residues histidine 156, cysteine 166, cysteine 168, and cysteine 173.

The protein belongs to the ROK (NagC/XylR) family. NanK subfamily. As to quaternary structure, homodimer.

The enzyme catalyses an N-acyl-D-mannosamine + ATP = an N-acyl-D-mannosamine 6-phosphate + ADP + H(+). It participates in amino-sugar metabolism; N-acetylneuraminate degradation; D-fructose 6-phosphate from N-acetylneuraminate: step 2/5. Functionally, catalyzes the phosphorylation of N-acetylmannosamine (ManNAc) to ManNAc-6-P. The protein is N-acetylmannosamine kinase of Escherichia coli O7:K1 (strain IAI39 / ExPEC).